The sequence spans 391 residues: MNHFDTIIIGGGPAGMMATISSSFYGQKTLLLEKNKRLGKKLAGTGGGRCNVTNNGNLDDLMAGIPGNGRFLYSVFSQFDNHDIINFFTENGVKLKVEDHGRVFPVTDKSRTIIEALEKKIAELGGTVITNTEIVSVKKTDELFTVRSSDQAWTCQKLIVTTGGKSYPSTGSTGFGHDIARHFKHTVTDLEAAESPLLTDFPHKALQGISLDDVTLSYGKHIITHDLLFTHFGLSGPAALRLSSFVKGGETIYLDVLPQMSQQDLADFLEEHREKSLKNCLKILLPERIADFFTQPFPEKVKQLNLSEKEALIKQIKELPISVTGKMSLAKSFVTKGGVSLKEINPKTLESKLVPGLHFAGEVLDINAHTGGFNITSALCTGWVAGSLHYD.

The FAD site is built by A14, E33, I134, E362, N374, and I375.

It belongs to the BaiN/RdsA family. As to quaternary structure, monomer. FAD is required as a cofactor.

Functionally, flavoprotein that probably catalyzes the condensation of two molecules of aminoacetone to yield 3,6-dimethyl-2,5-dihydropyrazine, which is subsequently oxidized to 2,5-dimethylpyrazine. It could be involved in a microbial defense mechanism related to aminoacetone catabolism through a pathway yielding dimethylpyrazine derivatives instead of methylglyoxal. It has also low aminoacetone oxidase activity, and can produce hydrogen peroxide from aminoacetone. In addition, it shows very low L-amino acid oxidase activity, and can produce hydrogen peroxide from peptone and from seven amino acids, L-aspartate, L-tryptophan, L-lysine, L-isoleucine, L-arginine, L-asparagine and L-glutamine. It cannot use L-malate, oxaloacetate or alpha-aminobutyrate. Plays a role in antioxidant defense. The chain is Aminoacetone oxidase from Streptococcus cristatus.